Reading from the N-terminus, the 101-residue chain is Large ribosomal subunit protein uL24 (101 aa).

Belongs to the universal ribosomal protein uL24 family. In terms of assembly, part of the 50S ribosomal subunit.

In terms of biological role, one of two assembly initiator proteins, it binds directly to the 5'-end of the 23S rRNA, where it nucleates assembly of the 50S subunit. One of the proteins that surrounds the polypeptide exit tunnel on the outside of the subunit. The polypeptide is Large ribosomal subunit protein uL24 (Ruegeria sp. (strain TM1040) (Silicibacter sp.)).